The chain runs to 182 residues: MVEQNPAAVIEWVDIVDEQNNVIAQSSRQQMRAQRLRHRATYIVVHDGMGKILVQRRTESKDFHPGKLDATAGGVVQSGENYLESARREAEEELGIAGVPFAEHGQFYFEEECCRVWGALFSCVSHGPFALQPEEIDEVCWMVPEEITARCDEFTPDSLKALSLWLTRNNEQDYGKITPREA.

Positions 36 to 164 (LRHRATYIVV…TPDSLKALSL (129 aa)) constitute a Nudix hydrolase domain. A Nudix box motif is present at residues 73–95 (GGVVQSGENYLESARREAEEELG). Mg(2+) contacts are provided by glutamate 89 and glutamate 93.

The protein belongs to the Nudix hydrolase family. The cofactor is Mg(2+).

This is an uncharacterized protein from Yersinia pestis.